The primary structure comprises 465 residues: Dihydrolipoyl dehydrogenase (465 aa).

FAD-binding positions include 34-42 (EEREAGGTC), lysine 51, and glycine 114. A disulfide bond links cysteine 42 and cysteine 47. NAD(+) contacts are provided by residues 180–184 (GGGVI), glutamate 203, valine 237, and 264–267 (SIGR). The FAD site is built by aspartate 307 and alanine 315. Histidine 439 (proton acceptor) is an active-site residue.

It belongs to the class-I pyridine nucleotide-disulfide oxidoreductase family. It depends on FAD as a cofactor.

It localises to the cytoplasm. It carries out the reaction N(6)-[(R)-dihydrolipoyl]-L-lysyl-[protein] + NAD(+) = N(6)-[(R)-lipoyl]-L-lysyl-[protein] + NADH + H(+). Functionally, the branched-chain alpha-keto dehydrogenase complex catalyzes the overall conversion of alpha-keto acids to acyl-CoA and CO(2). It contains multiple copies of 3 enzymatic components: branched-chain alpha-keto acid decarboxylase (E1), lipoamide acyltransferase (E2) and lipoamide dehydrogenase (E3). This Chlamydia muridarum (strain MoPn / Nigg) protein is Dihydrolipoyl dehydrogenase (lpdA).